The chain runs to 152 residues: Small ribosomal subunit protein uS15 (152 aa).

Positions 1-11 are enriched in basic residues; the sequence is MAKMHTKRKGK. A disordered region spans residues 1 to 24; the sequence is MAKMHTKRKGKSSSTRPNRTEPPE.

The protein belongs to the universal ribosomal protein uS15 family. In terms of assembly, part of the 30S ribosomal subunit.

This chain is Small ribosomal subunit protein uS15, found in Methanosarcina mazei (strain ATCC BAA-159 / DSM 3647 / Goe1 / Go1 / JCM 11833 / OCM 88) (Methanosarcina frisia).